The following is a 504-amino-acid chain: Tachykinin-like peptides receptor 86C (504 aa).

The Extracellular portion of the chain corresponds to methionine 1 to threonine 84. N-linked (GlcNAc...) asparagine glycans are attached at residues asparagine 12, asparagine 28, and asparagine 36. A helical membrane pass occupies residues isoleucine 85–valine 108. Residues threonine 109–threonine 118 lie on the Cytoplasmic side of the membrane. The chain crosses the membrane as a helical span at residues asparagine 119–phenylalanine 143. At methionine 144–tyrosine 155 the chain is on the extracellular side. The chain crosses the membrane as a helical span at residues cysteine 156 to phenylalanine 179. Topologically, residues aspartate 180–arginine 199 are cytoplasmic. The helical transmembrane segment at isoleucine 200–threonine 224 threads the bilayer. The Extracellular segment spans residues lysine 225 to alanine 250. A helical transmembrane segment spans residues aspartate 251–serine 275. At leucine 276–phenylalanine 308 the chain is on the cytoplasmic side. A helical membrane pass occupies residues isoleucine 309–tyrosine 330. The Extracellular portion of the chain corresponds to histidine 331–histidine 343. A helical membrane pass occupies residues methionine 344–asparagine 367. Residues lysine 368 to methionine 504 are Cytoplasmic-facing. A disordered region spans residues proline 393–asparagine 450. 2 stretches are compositionally biased toward polar residues: residues serine 395–asparagine 404 and lysine 416–asparagine 450.

Belongs to the G-protein coupled receptor 1 family. As to expression, expressed in central nervous system, as well as in subsets of neurons in each segment of the developing ventral ganglia.

Its subcellular location is the cell membrane. In terms of biological role, receptor for tachykinin-like peptides. This chain is Tachykinin-like peptides receptor 86C (TkR86C), found in Drosophila melanogaster (Fruit fly).